The primary structure comprises 81 residues: Putative membrane protein insertion efficiency factor (81 aa).

The tract at residues 59–81 (PWNPGGYDPVPPIKTSRSSSMAE) is disordered.

The protein belongs to the UPF0161 family.

Its subcellular location is the cell inner membrane. Functionally, could be involved in insertion of integral membrane proteins into the membrane. The sequence is that of Putative membrane protein insertion efficiency factor from Azotobacter vinelandii (strain DJ / ATCC BAA-1303).